Here is a 221-residue protein sequence, read N- to C-terminus: Probable endo-1,4-beta-xylanase B (221 aa).

The first 19 residues, 1–19 (MVSFSSLALALSTVVGVLA), serve as a signal peptide directing secretion. Residues 33–221 (QLTHSQTGTK…SSGSATMTVS (189 aa)) form the GH11 domain. The active-site Nucleophile is the Glu117. The Proton donor role is filled by Glu208.

The protein belongs to the glycosyl hydrolase 11 (cellulase G) family.

It is found in the secreted. The catalysed reaction is Endohydrolysis of (1-&gt;4)-beta-D-xylosidic linkages in xylans.. Its pathway is glycan degradation; xylan degradation. In terms of biological role, endo-1,4-beta-xylanase involved in the hydrolysis of xylan, a major structural heterogeneous polysaccharide found in plant biomass representing the second most abundant polysaccharide in the biosphere, after cellulose. This Aspergillus clavatus (strain ATCC 1007 / CBS 513.65 / DSM 816 / NCTC 3887 / NRRL 1 / QM 1276 / 107) protein is Probable endo-1,4-beta-xylanase B (xlnB).